The chain runs to 103 residues: Small ribosomal subunit protein uS10 (103 aa).

Positions L35–T59 are disordered.

The protein belongs to the universal ribosomal protein uS10 family. Part of the 30S ribosomal subunit.

Involved in the binding of tRNA to the ribosomes. In Haloarcula marismortui (strain ATCC 43049 / DSM 3752 / JCM 8966 / VKM B-1809) (Halobacterium marismortui), this protein is Small ribosomal subunit protein uS10 (rps10).